A 149-amino-acid polypeptide reads, in one-letter code: Large ribosomal subunit protein eL19 (149 aa).

Positions 55–69 (KGISSARKKEVQEQK) are enriched in basic and acidic residues. The tract at residues 55–93 (KGISSARKKEVQEQKRKGKRKGPGSRRGAKGARTPKKEK) is disordered. Residues 70–88 (RKGKRKGPGSRRGAKGART) are compositionally biased toward basic residues.

It belongs to the eukaryotic ribosomal protein eL19 family. Part of the 50S ribosomal subunit.

Functionally, binds to the 23S rRNA. This Methanococcus vannielii protein is Large ribosomal subunit protein eL19.